A 431-amino-acid polypeptide reads, in one-letter code: Adenylosuccinate synthetase (431 aa).

Residues 13 to 19 and 41 to 43 each bind GTP; these read GDEGKGK and GHT. D14 acts as the Proton acceptor in catalysis. Mg(2+) is bound by residues D14 and G41. IMP contacts are provided by residues 14 to 17, 39 to 42, T130, R144, Q225, T240, and R306; these read DEGK and NAGH. H42 serves as the catalytic Proton donor. Position 302–308 (302–308) interacts with substrate; sequence ATTGRQR. Residues R308, 334 to 336, and 416 to 418 contribute to the GTP site; these read KLD and STG.

It belongs to the adenylosuccinate synthetase family. As to quaternary structure, homodimer. It depends on Mg(2+) as a cofactor.

It is found in the cytoplasm. The catalysed reaction is IMP + L-aspartate + GTP = N(6)-(1,2-dicarboxyethyl)-AMP + GDP + phosphate + 2 H(+). Its pathway is purine metabolism; AMP biosynthesis via de novo pathway; AMP from IMP: step 1/2. In terms of biological role, plays an important role in the de novo pathway of purine nucleotide biosynthesis. Catalyzes the first committed step in the biosynthesis of AMP from IMP. This chain is Adenylosuccinate synthetase, found in Halorhodospira halophila (strain DSM 244 / SL1) (Ectothiorhodospira halophila (strain DSM 244 / SL1)).